Here is a 162-residue protein sequence, read N- to C-terminus: UPF0260 protein Atu0932 (162 aa).

Belongs to the UPF0260 family.

In Agrobacterium fabrum (strain C58 / ATCC 33970) (Agrobacterium tumefaciens (strain C58)), this protein is UPF0260 protein Atu0932.